A 212-amino-acid polypeptide reads, in one-letter code: ER lumen protein-retaining receptor 2 (212 aa).

Residues 1 to 4 (MNVF) lie on the Lumenal side of the membrane. The chain crosses the membrane as a helical span at residues 5 to 24 (RLSGDLSHLAAIIILLLKIW). The Cytoplasmic portion of the chain corresponds to 25–32 (KSRSCAGI). A helical transmembrane segment spans residues 33 to 52 (SGKSQLLFALVFTTRYLDLL). The interval 47–48 (RY) is interaction with the K-D-E-L motif on target proteins. The Lumenal segment spans residues 53–58 (TSFISL). Residues 59–79 (YNTSMKVIYIGCAYATVYLIY) form a helical membrane-spanning segment. Over 80-92 (MKFKATYDGNHDT) the chain is Cytoplasmic. The chain crosses the membrane as a helical span at residues 93 to 110 (FRVEFLVVPVGGLSVLVN). At 111 to 116 (HDFSPL) the chain is on the lumenal side. The chain crosses the membrane as a helical span at residues 117 to 135 (EILWTFSIYLESVAILPQL). Topologically, residues 136-149 (FMISKTGEAETITT) are cytoplasmic. Residues 150–168 (HYLFFLGLYRALYLFNWIW) traverse the membrane as a helical segment. Positions 159–169 (RALYLFNWIWR) are interaction with the K-D-E-L motif on target proteins. Over 169 to 178 (RYSFEGFFDL) the chain is Lumenal. The helical transmembrane segment at 179-199 (IAIVAGVVQTILYCDFFYLYV) threads the bilayer. Over 200-212 (TKVLKGKKLSLPA) the chain is Cytoplasmic. An important for recycling of cargo proteins with the sequence motif K-D-E-L from the Golgi to the endoplasmic reticulum region spans residues 204-207 (KGKK).

Belongs to the ERD2 family.

Its subcellular location is the endoplasmic reticulum membrane. It is found in the golgi apparatus membrane. The protein resides in the cytoplasmic vesicle. It localises to the COPI-coated vesicle membrane. In terms of biological role, receptor for the C-terminal sequence motif K-D-E-L that is present on endoplasmic reticulum resident proteins and that mediates their recycling from the Golgi back to the endoplasmic reticulum. Binding is pH dependent, and is optimal at pH 5-5.4. This chain is ER lumen protein-retaining receptor 2 (kdelr2), found in Xenopus tropicalis (Western clawed frog).